A 391-amino-acid polypeptide reads, in one-letter code: Chaperone protein DnaJ (391 aa).

Positions 4–68 (DFYDVLGVSR…ETRQQYDQLG (65 aa)) constitute a J domain. Positions 53-79 (DVLTDEETRQQYDQLGHERFEEAEKRG) are enriched in basic and acidic residues. Disordered regions lie at residues 53–94 (DVLT…MGGA) and 117–136 (FFGG…EQGR). Gly residues-rich tracts occupy residues 81–94 (TGNG…MGGA) and 119–129 (GGAGGGGGRGR). Residues 152-234 (GVSKQVTVRR…CGGQGQTRER (83 aa)) form a CR-type zinc finger. The Zn(2+) site is built by Cys-165, Cys-168, Cys-182, Cys-185, Cys-208, Cys-211, Cys-222, and Cys-225. CXXCXGXG motif repeat units follow at residues 165–172 (CADCGGSG), 182–189 (CPQCDGQG), 208–215 (CSRCGGEG), and 222–229 (CSTCGGQG).

Belongs to the DnaJ family. Homodimer. The cofactor is Zn(2+).

The protein localises to the cytoplasm. Functionally, participates actively in the response to hyperosmotic and heat shock by preventing the aggregation of stress-denatured proteins and by disaggregating proteins, also in an autonomous, DnaK-independent fashion. Unfolded proteins bind initially to DnaJ; upon interaction with the DnaJ-bound protein, DnaK hydrolyzes its bound ATP, resulting in the formation of a stable complex. GrpE releases ADP from DnaK; ATP binding to DnaK triggers the release of the substrate protein, thus completing the reaction cycle. Several rounds of ATP-dependent interactions between DnaJ, DnaK and GrpE are required for fully efficient folding. Also involved, together with DnaK and GrpE, in the DNA replication of plasmids through activation of initiation proteins. The protein is Chaperone protein DnaJ of Halobacterium salinarum (strain ATCC 29341 / DSM 671 / R1).